The sequence spans 300 residues: Polyamine aminopropyltransferase (300 aa).

Residues 4 to 237 (WHWHIEWQTP…GLWGFVYASD (234 aa)) enclose the PABS domain. An S-methyl-5'-thioadenosine-binding site is contributed by Gln33. Residues His64 and Glu88 each coordinate spermidine. Residues Asp108 and 140–141 (DG) contribute to the S-methyl-5'-thioadenosine site. Asp158 acts as the Proton acceptor in catalysis. Pro167 lines the S-methyl-5'-thioadenosine pocket.

The protein belongs to the spermidine/spermine synthase family. Homodimer or homotetramer.

It is found in the cytoplasm. The catalysed reaction is S-adenosyl 3-(methylsulfanyl)propylamine + putrescine = S-methyl-5'-thioadenosine + spermidine + H(+). Its pathway is amine and polyamine biosynthesis; spermidine biosynthesis; spermidine from putrescine: step 1/1. Functionally, catalyzes the irreversible transfer of a propylamine group from the amino donor S-adenosylmethioninamine (decarboxy-AdoMet) to putrescine (1,4-diaminobutane) to yield spermidine. In Sulfurisphaera tokodaii (strain DSM 16993 / JCM 10545 / NBRC 100140 / 7) (Sulfolobus tokodaii), this protein is Polyamine aminopropyltransferase.